A 267-amino-acid chain; its full sequence is 4-hydroxy-tetrahydrodipicolinate reductase (267 aa).

Residues 8–13 and aspartate 34 contribute to the NAD(+) site; that span reads GAAGRM. Position 35 (arginine 35) interacts with NADP(+). Residues 98–100 and 122–125 each bind NAD(+); these read GTT and AANF. Catalysis depends on histidine 155, which acts as the Proton donor/acceptor. Position 156 (histidine 156) interacts with (S)-2,3,4,5-tetrahydrodipicolinate. The active-site Proton donor is the lysine 159. 165 to 166 provides a ligand contact to (S)-2,3,4,5-tetrahydrodipicolinate; it reads GT.

Belongs to the DapB family.

Its subcellular location is the cytoplasm. It carries out the reaction (S)-2,3,4,5-tetrahydrodipicolinate + NAD(+) + H2O = (2S,4S)-4-hydroxy-2,3,4,5-tetrahydrodipicolinate + NADH + H(+). It catalyses the reaction (S)-2,3,4,5-tetrahydrodipicolinate + NADP(+) + H2O = (2S,4S)-4-hydroxy-2,3,4,5-tetrahydrodipicolinate + NADPH + H(+). It functions in the pathway amino-acid biosynthesis; L-lysine biosynthesis via DAP pathway; (S)-tetrahydrodipicolinate from L-aspartate: step 4/4. Catalyzes the conversion of 4-hydroxy-tetrahydrodipicolinate (HTPA) to tetrahydrodipicolinate. The sequence is that of 4-hydroxy-tetrahydrodipicolinate reductase from Pseudomonas putida (strain GB-1).